The following is a 1071-amino-acid chain: ATP-dependent helicase/deoxyribonuclease subunit B (1071 aa).

It belongs to the helicase family. AddB/RexB type 2 subfamily. Heterodimer of AddA and RexB. Requires Mg(2+) as cofactor.

The heterodimer acts as both an ATP-dependent DNA helicase and an ATP-dependent, dual-direction single-stranded exonuclease. Recognizes the chi site generating a DNA molecule suitable for the initiation of homologous recombination. This subunit has 5' -&gt; 3' nuclease activity but not helicase activity. This chain is ATP-dependent helicase/deoxyribonuclease subunit B, found in Streptococcus pyogenes serotype M12 (strain MGAS9429).